A 159-amino-acid chain; its full sequence is Na(+)/H(+) antiporter subunit E1 (159 aa).

4 helical membrane-spanning segments follow: residues 1-21 (MAVQ…VTNS), 27-47 (FVLG…VLPG), 49-69 (FYVI…IELI), and 101-121 (WQIV…VLGV).

This sequence belongs to the CPA3 antiporters (TC 2.A.63) subunit E family. May form a heterooligomeric complex that consists of seven subunits: mnhA1, mnhB1, mnhC1, mnhD1, mnhE1, mnhF1 and mnhG1.

It localises to the cell membrane. In terms of biological role, mnh complex is a Na(+)/H(+) antiporter involved in Na(+) excretion. This Staphylococcus aureus (strain Mu3 / ATCC 700698) protein is Na(+)/H(+) antiporter subunit E1 (mnhE1).